Reading from the N-terminus, the 438-residue chain is GTPase Der (438 aa).

EngA-type G domains are found at residues 4 to 168 and 176 to 351; these read PIVA…PAVP and LKVA…EAAN. GTP is bound by residues 10 to 17, 57 to 61, 120 to 123, 182 to 189, 229 to 233, and 294 to 297; these read GRPNVGKS, DTGGI, NKVE, DTAGM, and NKWD. In terms of domain architecture, KH-like spans 352–436; sequence RRVATGTLNA…PIRLIFRRGR (85 aa).

It belongs to the TRAFAC class TrmE-Era-EngA-EngB-Septin-like GTPase superfamily. EngA (Der) GTPase family. In terms of assembly, associates with the 50S ribosomal subunit.

Its function is as follows. GTPase that plays an essential role in the late steps of ribosome biogenesis. The polypeptide is GTPase Der (Moorella thermoacetica (strain ATCC 39073 / JCM 9320)).